The primary structure comprises 724 residues: 1,4-alpha-glucan branching enzyme GlgB 1 (724 aa).

D403 acts as the Nucleophile in catalysis. E456 (proton donor) is an active-site residue.

The protein belongs to the glycosyl hydrolase 13 family. GlgB subfamily. As to quaternary structure, monomer.

It catalyses the reaction Transfers a segment of a (1-&gt;4)-alpha-D-glucan chain to a primary hydroxy group in a similar glucan chain.. It participates in glycan biosynthesis; glycogen biosynthesis. In terms of biological role, catalyzes the formation of the alpha-1,6-glucosidic linkages in glycogen by scission of a 1,4-alpha-linked oligosaccharide from growing alpha-1,4-glucan chains and the subsequent attachment of the oligosaccharide to the alpha-1,6 position. In Xanthomonas campestris pv. campestris (strain 8004), this protein is 1,4-alpha-glucan branching enzyme GlgB 1.